Reading from the N-terminus, the 290-residue chain is L-fucono-1,5-lactonase (290 aa).

This sequence belongs to the metallo-dependent hydrolases superfamily.

It catalyses the reaction L-fucono-1,5-lactone + H2O = L-fuconate + H(+). It carries out the reaction L-fucono-1,4-lactone + H2O = L-fuconate + H(+). The catalysed reaction is D-arabinono-1,4-lactone + H2O = D-arabinonate + H(+). The enzyme catalyses L-xylono-1,4-lactone + H2O = L-xylonate + H(+). It catalyses the reaction L-galactono-1,4-lactone + H2O = L-galactonate + H(+). Its function is as follows. Catalyzes the hydrolysis of L-fucono-1,5-lactone to L-fuconate. Can also hydrolyze L-fucono-1,4-lactone, L-galactono-1,4-lactone D-arabinono-1,4-lactone and L-xylono-1,4-lactone. The chain is L-fucono-1,5-lactonase from Burkholderia ambifaria (strain ATCC BAA-244 / DSM 16087 / CCUG 44356 / LMG 19182 / AMMD) (Burkholderia cepacia (strain AMMD)).